The sequence spans 469 residues: Ribulose bisphosphate carboxylase large chain (469 aa).

The propeptide occupies 1 to 2 (MS). Proline 3 bears the N-acetylproline mark. At lysine 14 the chain carries N6,N6,N6-trimethyllysine. Substrate contacts are provided by asparagine 123 and threonine 173. Lysine 175 functions as the Proton acceptor in the catalytic mechanism. Residue lysine 177 participates in substrate binding. Residues lysine 201, aspartate 203, and glutamate 204 each contribute to the Mg(2+) site. Lysine 201 bears the N6-carboxylysine mark. Histidine 294 functions as the Proton acceptor in the catalytic mechanism. Positions 295, 327, and 379 each coordinate substrate.

This sequence belongs to the RuBisCO large chain family. Type I subfamily. As to quaternary structure, heterohexadecamer of 8 large chains and 8 small chains; disulfide-linked. The disulfide link is formed within the large subunit homodimers. The cofactor is Mg(2+). Post-translationally, the disulfide bond which can form in the large chain dimeric partners within the hexadecamer appears to be associated with oxidative stress and protein turnover.

The protein localises to the plastid. Its subcellular location is the chloroplast. The catalysed reaction is 2 (2R)-3-phosphoglycerate + 2 H(+) = D-ribulose 1,5-bisphosphate + CO2 + H2O. The enzyme catalyses D-ribulose 1,5-bisphosphate + O2 = 2-phosphoglycolate + (2R)-3-phosphoglycerate + 2 H(+). RuBisCO catalyzes two reactions: the carboxylation of D-ribulose 1,5-bisphosphate, the primary event in carbon dioxide fixation, as well as the oxidative fragmentation of the pentose substrate in the photorespiration process. Both reactions occur simultaneously and in competition at the same active site. This Brexia madagascariensis protein is Ribulose bisphosphate carboxylase large chain.